A 488-amino-acid polypeptide reads, in one-letter code: DNA polymerase II small subunit (488 aa).

It belongs to the DNA polymerase delta/II small subunit family. As to quaternary structure, heterodimer of a large subunit and a small subunit.

It carries out the reaction DNA(n) + a 2'-deoxyribonucleoside 5'-triphosphate = DNA(n+1) + diphosphate. The enzyme catalyses Exonucleolytic cleavage in the 3'- to 5'-direction to yield nucleoside 5'-phosphates.. Functionally, possesses two activities: a DNA synthesis (polymerase) and an exonucleolytic activity that degrades single-stranded DNA in the 3' to 5' direction. Has a template-primer preference which is characteristic of a replicative DNA polymerase. The protein is DNA polymerase II small subunit (polB) of Thermoplasma acidophilum (strain ATCC 25905 / DSM 1728 / JCM 9062 / NBRC 15155 / AMRC-C165).